We begin with the raw amino-acid sequence, 337 residues long: U11/U12 small nuclear ribonucleoprotein 48 kDa protein (337 aa).

The CHHC U11-48K-type zinc-finger motif lies at Ile55–Lys82. Zn(2+) is bound by residues Cys58, His64, His74, and Cys78. Residues Lys87 and Lys104 each participate in a glycyl lysine isopeptide (Lys-Gly) (interchain with G-Cter in SUMO2) cross-link. A compositionally biased stretch (basic and acidic residues) spans His255–Ala276. The disordered stretch occupies residues His255–Ile337. The span at Arg294–Lys310 shows a compositional bias: basic residues. The segment covering Asp311–Arg326 has biased composition (basic and acidic residues). The span at His327 to Ile337 shows a compositional bias: basic residues.

In terms of assembly, component of the U11/U12 snRNPs that are part of the U12-type spliceosome. Not found in the major spliceosome.

The protein resides in the nucleus. Functionally, likely involved in U12-type 5' splice site recognition. This Mus musculus (Mouse) protein is U11/U12 small nuclear ribonucleoprotein 48 kDa protein (Snrnp48).